The chain runs to 378 residues: Probable pectin lyase A (378 aa).

Residues 1–18 (MKYQGLLAIAGCIASASA) form the signal peptide. 2 cysteine pairs are disulfide-bonded: Cys81–Cys100 and Cys90–Cys224. N-linked (GlcNAc...) asparagine glycosylation occurs at Asn127. Residue Arg254 is part of the active site. Cysteines 321 and 329 form a disulfide.

The protein belongs to the polysaccharide lyase 1 family.

The protein resides in the secreted. The catalysed reaction is Eliminative cleavage of (1-&gt;4)-alpha-D-galacturonan methyl ester to give oligosaccharides with 4-deoxy-6-O-methyl-alpha-D-galact-4-enuronosyl groups at their non-reducing ends.. In terms of biological role, pectinolytic enzymes consist of four classes of enzymes: pectin lyase, polygalacturonase, pectin methylesterase and rhamnogalacturonase. Among pectinolytic enzymes, pectin lyase is the most important in depolymerization of pectin, since it cleaves internal glycosidic bonds of highly methylated pectins. The sequence is that of Probable pectin lyase A (pelA) from Neosartorya fischeri (strain ATCC 1020 / DSM 3700 / CBS 544.65 / FGSC A1164 / JCM 1740 / NRRL 181 / WB 181) (Aspergillus fischerianus).